The sequence spans 329 residues: Ribosomal RNA small subunit methyltransferase H (329 aa).

S-adenosyl-L-methionine contacts are provided by residues 34 to 36 (GGY), aspartate 52, phenylalanine 79, aspartate 100, and glutamine 107. Residues 285–329 (GEDEVAHNPRARSAKLRAAERTSAPAHKDDQSSSWPRLSDVMRGG) form a disordered region.

It belongs to the methyltransferase superfamily. RsmH family.

The protein resides in the cytoplasm. The enzyme catalyses cytidine(1402) in 16S rRNA + S-adenosyl-L-methionine = N(4)-methylcytidine(1402) in 16S rRNA + S-adenosyl-L-homocysteine + H(+). Its function is as follows. Specifically methylates the N4 position of cytidine in position 1402 (C1402) of 16S rRNA. The chain is Ribosomal RNA small subunit methyltransferase H from Bradyrhizobium diazoefficiens (strain JCM 10833 / BCRC 13528 / IAM 13628 / NBRC 14792 / USDA 110).